Here is a 280-residue protein sequence, read N- to C-terminus: 2-dehydro-3-deoxyphosphooctonate aldolase (280 aa).

It belongs to the KdsA family.

Its subcellular location is the cytoplasm. The enzyme catalyses D-arabinose 5-phosphate + phosphoenolpyruvate + H2O = 3-deoxy-alpha-D-manno-2-octulosonate-8-phosphate + phosphate. The protein operates within carbohydrate biosynthesis; 3-deoxy-D-manno-octulosonate biosynthesis; 3-deoxy-D-manno-octulosonate from D-ribulose 5-phosphate: step 2/3. Its pathway is bacterial outer membrane biogenesis; lipopolysaccharide biosynthesis. The protein is 2-dehydro-3-deoxyphosphooctonate aldolase of Pseudomonas putida (strain W619).